Reading from the N-terminus, the 153-residue chain is uncharacterized protein (153 aa).

Transmembrane regions (helical) follow at residues 1 to 21 (MAAT…LFFS) and 106 to 126 (IVPI…TVYI).

The protein localises to the membrane. This is an uncharacterized protein from Saccharomyces cerevisiae (strain ATCC 204508 / S288c) (Baker's yeast).